The primary structure comprises 373 residues: Glutamine synthetase (373 aa).

Ala2 is subject to N-acetylalanine. A required for glutamine-induced ubiquitination by CRL4(CRBN) and proteasomal degradation region spans residues 2–25 (ATSASSHLNKGIKQVYMALPQGDK). An N6-acetyllysine mark is found at Lys11 and Lys14. The region spanning 26–106 (VQAMYIWIDG…VFCEVFKYNR (81 aa)) is the GS beta-grasp domain. Tyr104 carries the post-translational modification Phosphotyrosine. The GS catalytic domain maps to 113–373 (LRHTCKRIMD…TGDEPFQYKN (261 aa)). Glu134 is an ATP binding site. The Mn(2+) site is built by Glu134, Glu136, Glu196, and Glu203. Residue 203-208 (EFQIGP) participates in ATP binding. 246–247 (NW) contacts L-glutamate. His253 contacts Mn(2+). Residues 255–257 (NFS), Arg319, and Arg324 contribute to the ATP site. Residue Arg319 participates in L-glutamate binding. 336–338 (YFE) lines the ADP pocket. Residue Glu338 coordinates Mn(2+). Arg340 is an L-glutamate binding site. A Phosphoserine modification is found at Ser343.

This sequence belongs to the glutamine synthetase family. Decamer; composed of two pentamers. Interacts with PALMD. Interacts with RHOJ. Interacts with BEST2; this interaction tethers a fraction of GLUL to the membrane, causing a decrease of cytosolic glutamine synthase (GS) activity and inhibits the chloride channel activity of BEST2 by affecting the gating at the aperture in the absence of intracellular glutamate. It depends on Mg(2+) as a cofactor. Requires Mn(2+) as cofactor. In terms of processing, palmitoylated; undergoes autopalmitoylation. Post-translationally, acetylated by EP300/p300; acetylation is stimulated by increased glutamine levels and promotes ubiquitin-mediated proteasomal degradation. Ubiquitinated by ZNRF1. Ubiquitinated by the DCX (DDB1-CUL4-X-box) E3 ubiquitin-protein ligase complex called CRL4(CRBN), leading to proteasomal degradation.

The protein localises to the cytoplasm. The protein resides in the cytosol. It localises to the microsome. Its subcellular location is the mitochondrion. It is found in the cell membrane. It carries out the reaction L-glutamate + NH4(+) + ATP = L-glutamine + ADP + phosphate + H(+). The enzyme catalyses L-cysteinyl-[protein] + hexadecanoyl-CoA = S-hexadecanoyl-L-cysteinyl-[protein] + CoA. Glutamine synthetase activity is inhibited by methionine sulfoximine (MSO). In terms of biological role, glutamine synthetase that catalyzes the ATP-dependent conversion of glutamate and ammonia to glutamine. Its role depends on tissue localization: in the brain, it regulates the levels of toxic ammonia and converts neurotoxic glutamate to harmless glutamine, whereas in the liver, it is one of the enzymes responsible for the removal of ammonia. Plays a key role in ammonium detoxification during erythropoiesis: the glutamine synthetase activity is required to remove ammonium generated by porphobilinogen deaminase (HMBS) during heme biosynthesis to prevent ammonium accumulation and oxidative stress. Essential for proliferation of fetal skin fibroblasts. Independently of its glutamine synthetase activity, required for endothelial cell migration during vascular development. Involved in angiogenesis by regulating membrane localization and activation of the GTPase RHOJ, possibly by promoting RHOJ palmitoylation. May act as a palmitoyltransferase for RHOJ: able to autopalmitoylate and then transfer the palmitoyl group to RHOJ. Plays a role in ribosomal 40S subunit biogenesis. Through the interaction with BEST2, inhibits BEST2 channel activity by affecting the gating at the aperture in the absence of intracellular L-glutamate, but sensitizes BEST2 to intracellular L-glutamate, which promotes the opening of BEST2 and thus relieves its inhibitory effect on BEST2. This Bos taurus (Bovine) protein is Glutamine synthetase.